The primary structure comprises 499 residues: Cysteine--tRNA ligase (499 aa).

Cys30 contributes to the Zn(2+) binding site. The 'HIGH' region motif lies at 32–42 (PTVYDRAHLGN). Zn(2+) contacts are provided by Cys221, His246, and Glu250. The 'KMSKS' region signature appears at 279–283 (KMSKS). Residue Lys282 coordinates ATP.

It belongs to the class-I aminoacyl-tRNA synthetase family. In terms of assembly, monomer. It depends on Zn(2+) as a cofactor.

It localises to the cytoplasm. It catalyses the reaction tRNA(Cys) + L-cysteine + ATP = L-cysteinyl-tRNA(Cys) + AMP + diphosphate. The polypeptide is Cysteine--tRNA ligase (Cereibacter sphaeroides (strain ATCC 17023 / DSM 158 / JCM 6121 / CCUG 31486 / LMG 2827 / NBRC 12203 / NCIMB 8253 / ATH 2.4.1.) (Rhodobacter sphaeroides)).